Here is a 141-residue protein sequence, read N- to C-terminus: Putative ankyrin repeat protein FPV223 (141 aa).

ANK repeat units lie at residues Ser-21–Lys-50, Cys-54–Lys-83, Arg-85–Ser-114, and Asp-118–Ile-140.

This Vertebrata (FPV) protein is Putative ankyrin repeat protein FPV223.